Consider the following 335-residue polypeptide: CTD kinase subunit beta (335 aa).

Cyclin N-terminal domains lie at 26 to 151 (ILST…CFDF) and 158 to 241 (NYMV…LYMH). The interval 269–293 (KNSGRPQKPPQIDPHSSSLADEYRE) is disordered.

It belongs to the cyclin family. CTDK-I consists of three subunits, ctk1/lsk1, ctk2/lsc1 and ctk3 (also called alpha, beta and gamma). Interacts with ctk1/lsk1. This interaction is dependent on ctk1/lsk1 kinase activity.

The protein localises to the cytoplasm. The protein resides in the nucleus. In terms of biological role, cyclin subunit of the CTDK-I complex, which hyperphosphorylates the C-terminal heptapeptide repeat domain (CTD) of the largest RNA polymerase II subunit. As part of the CTDK-I complex, involved in RNA polymerase II transcriptional elongation and pre-mRNA 3'-end processing. Together with ctk3, required for ctk1/lsk1 CTD kinase activation. Together with ctk1/lsk1, required for the regulation of cytokinesis by phosphorylating 'Ser-2' residues found in the heptad repeats of the CTD. This is CTD kinase subunit beta (lsc1) from Schizosaccharomyces pombe (strain 972 / ATCC 24843) (Fission yeast).